The sequence spans 119 residues: Large ribosomal subunit protein bL20 (119 aa).

This sequence belongs to the bacterial ribosomal protein bL20 family.

Functionally, binds directly to 23S ribosomal RNA and is necessary for the in vitro assembly process of the 50S ribosomal subunit. It is not involved in the protein synthesizing functions of that subunit. This is Large ribosomal subunit protein bL20 from Stenotrophomonas maltophilia (strain K279a).